A 570-amino-acid chain; its full sequence is Protein NRT1/ PTR FAMILY 8.1 (570 aa).

Position 98 is a phosphothreonine (threonine 98). 10 helical membrane-spanning segments follow: residues isoleucine 99 to valine 119, alanine 140 to valine 160, phenylalanine 182 to valine 202, tryptophan 210 to phenylalanine 230, isoleucine 329 to methionine 349, leucine 377 to leucine 397, methionine 414 to valine 434, isoleucine 454 to glycine 474, leucine 494 to methionine 514, and tyrosine 537 to serine 557.

Belongs to the major facilitator superfamily. Proton-dependent oligopeptide transporter (POT/PTR) (TC 2.A.17) family. In terms of tissue distribution, expressed in cotyledons, hypocotyls, leaves, roots, flowers, pistils and vascular tissue of sepals, anthers, carpels and funiculi. Not detected in seeds.

The protein resides in the cell membrane. Peptide transporter. Mediates the transport of di- and tripeptides. High affinity transporter with low selectivity. No transport of amino acids. This is Protein NRT1/ PTR FAMILY 8.1 (NPF8.1) from Arabidopsis thaliana (Mouse-ear cress).